The chain runs to 215 residues: MTSFSKSDTCVIFGGSFNPPHIGHTVILSYALDYFNADFYIIPTKTPPHKVVDIDFDKRFEWVMKSFKCFDTYKKNQIFLWDLEKHIFGVNYAIKNVEYFRKYYSNTIILVGEDALGNIEKWYKYEELLNITTFAIYPRTRDGSLYKRGQQILGNLYSNVIELRDFPLIEISSSDIRKRIVEGKSIIGFVDGEILEDVTNTYLMHHKSHGGNWNE.

This sequence belongs to the NadD family.

The enzyme catalyses nicotinate beta-D-ribonucleotide + ATP + H(+) = deamido-NAD(+) + diphosphate. It participates in cofactor biosynthesis; NAD(+) biosynthesis; deamido-NAD(+) from nicotinate D-ribonucleotide: step 1/1. In terms of biological role, catalyzes the reversible adenylation of nicotinate mononucleotide (NaMN) to nicotinic acid adenine dinucleotide (NaAD). The chain is Probable nicotinate-nucleotide adenylyltransferase from Fervidobacterium nodosum (strain ATCC 35602 / DSM 5306 / Rt17-B1).